The chain runs to 366 residues: Molybdopterin synthase catalytic subunit (366 aa).

Substrate contacts are provided by residues 101 to 102, K117, and 124 to 126; these read HR and KKE.

This sequence belongs to the MoaE family. MOCS2B subfamily. Heterotetramer; composed of 2 small (Mocs2A) and 2 large (Mocs2B) subunits.

The protein resides in the cytoplasm. It catalyses the reaction 2 [molybdopterin-synthase sulfur-carrier protein]-C-terminal-Gly-aminoethanethioate + cyclic pyranopterin phosphate + H2O = molybdopterin + 2 [molybdopterin-synthase sulfur-carrier protein]-C-terminal Gly-Gly + 2 H(+). It participates in cofactor biosynthesis; molybdopterin biosynthesis. Its function is as follows. Catalytic subunit of the molybdopterin synthase complex, a complex that catalyzes the conversion of precursor Z into molybdopterin. Acts by mediating the incorporation of 2 sulfur atoms from thiocarboxylated Mocs2A into precursor Z to generate a dithiolene group. The protein is Molybdopterin synthase catalytic subunit of Drosophila mojavensis (Fruit fly).